A 520-amino-acid chain; its full sequence is tRNA (guanine-N(7)-)-methyltransferase non-catalytic subunit TRM82 (520 aa).

Positions 51-102 are disordered; it reads PLDSEISPDRASSAGTCAEPPEKRRKLTPPVDESGEAQTEQSAKAKARKSQT. WD repeat units lie at residues 105–145, 244–291, and 296–338; these read QAWS…KLTQ, GHVS…HIIH, and GHTS…QTIP.

It belongs to the WD repeat TRM82 family. Forms a heterodimer with the catalytic subunit TRM8.

The protein resides in the nucleus. The protein operates within tRNA modification; N(7)-methylguanine-tRNA biosynthesis. Its function is as follows. Required for the formation of N(7)-methylguanine at position 46 (m7G46) in tRNA. In the complex, it is required to stabilize and induce conformational changes of the catalytic subunit. The chain is tRNA (guanine-N(7)-)-methyltransferase non-catalytic subunit TRM82 from Coccidioides immitis (strain RS) (Valley fever fungus).